Here is a 169-residue protein sequence, read N- to C-terminus: E1B protein, small T-antigen (169 aa).

Residues 147-169 form a disordered region; it reads GSVVEEEQGEEHLARDSDDPFFD. Positions 156–169 are enriched in basic and acidic residues; sequence EEHLARDSDDPFFD.

The protein belongs to the adenoviridae E1B 19 kDa protein family.

The chain is E1B protein, small T-antigen from Canine adenovirus serotype 1 (strain Glaxo) (CAdV-1).